Reading from the N-terminus, the 645-residue chain is Rho GTPase-activating protein 25 (645 aa).

The PH domain occupies 46-151 (RPIKMGWLKK…WVKFLRRVAG (106 aa)). Positions 159–353 (QRLDETVAYE…MMIRDHEVLF (195 aa)) constitute a Rho-GAP domain. 2 disordered regions span residues 355–444 (KSKD…QTLP) and 469–550 (FWSP…EEEI). Phosphoserine occurs at positions 362 and 395. Low complexity predominate over residues 393 to 409 (TDSFSSMTSDSDTTSPT). The residue at position 406 (Thr406) is a Phosphothreonine. The span at 420-431 (DSSKVPREKPGD) shows a compositional bias: basic and acidic residues. Polar residues predominate over residues 487-504 (SQDLRQLSDSQRTSTYDN). Position 536 is a phosphoserine (Ser536). Residues 541 to 644 (GKKNSGEEEI…VKSMKEPKTE (104 aa)) are a coiled coil.

Its function is as follows. GTPase activator for the Rho-type GTPases by converting them to an inactive GDP-bound state. The polypeptide is Rho GTPase-activating protein 25 (ARHGAP25) (Homo sapiens (Human)).